Here is a 175-residue protein sequence, read N- to C-terminus: Zinc metalloproteinase-disintegrin-like catroriarin (175 aa).

A Disintegrin domain is found at 1 to 63 (NPCCDAATCK…ECPADVFHKN (63 aa)). 9 disulfides stabilise this stretch: Cys-3-Cys-26, Cys-17-Cys-23, Cys-22-Cys-48, Cys-35-Cys-55, Cys-42-Cys-74, Cys-67-Cys-79, Cys-101-Cys-147, Cys-114-Cys-124, and Cys-131-Cys-171. A D/ECD-tripeptide motif is present at residues 41–43 (ECD). Ca(2+) contacts are provided by Asp-43, Pro-44, Glu-46, Asp-58, and Val-59.

Belongs to the venom metalloproteinase (M12B) family. P-III subfamily. P-IIIa sub-subfamily. As to quaternary structure, monomer. Zn(2+) serves as cofactor. Post-translationally, glycosylated. As to expression, expressed by the venom gland.

It is found in the secreted. Functionally, snake venom metalloproteinase that impairs hemostasis in the envenomed animal. The chain is Zinc metalloproteinase-disintegrin-like catroriarin from Crotalus atrox (Western diamondback rattlesnake).